The chain runs to 224 residues: Ribonuclease 3 (224 aa).

The RNase III domain occupies 4–127 (YSKLEKCLDY…IMGAIYLESG (124 aa)). Glu-40 provides a ligand contact to Mg(2+). The active site involves Asp-44. 2 residues coordinate Mg(2+): Asp-113 and Glu-116. The active site involves Glu-116. The region spanning 154 to 223 (DYKTALQEIT…AKIAIDKLKE (70 aa)) is the DRBM domain.

It belongs to the ribonuclease III family. As to quaternary structure, homodimer. The cofactor is Mg(2+).

It localises to the cytoplasm. The catalysed reaction is Endonucleolytic cleavage to 5'-phosphomonoester.. Functionally, digests double-stranded RNA. Involved in the processing of primary rRNA transcript to yield the immediate precursors to the large and small rRNAs (23S and 16S). Processes some mRNAs, and tRNAs when they are encoded in the rRNA operon. Processes pre-crRNA and tracrRNA of type II CRISPR loci if present in the organism. In Aliarcobacter butzleri (strain RM4018) (Arcobacter butzleri), this protein is Ribonuclease 3.